The sequence spans 204 residues: Holliday junction branch migration complex subunit RuvA (204 aa).

The interval 1–64 (MIGHLTGRLV…EDAHLLFGFS (64 aa)) is domain I. The domain II stretch occupies residues 65-143 (QKTDRTLFRE…GIQQEDFFIE (79 aa)). The interval 144–155 (SQHLKQPEHALN) is flexible linker. The interval 156–204 (EQDIPASEAISALIALGYKAAEAEKLVKKISKPALSSEQLIREALKAAL) is domain III.

The protein belongs to the RuvA family. In terms of assembly, homotetramer. Forms an RuvA(8)-RuvB(12)-Holliday junction (HJ) complex. HJ DNA is sandwiched between 2 RuvA tetramers; dsDNA enters through RuvA and exits via RuvB. An RuvB hexamer assembles on each DNA strand where it exits the tetramer. Each RuvB hexamer is contacted by two RuvA subunits (via domain III) on 2 adjacent RuvB subunits; this complex drives branch migration. In the full resolvosome a probable DNA-RuvA(4)-RuvB(12)-RuvC(2) complex forms which resolves the HJ.

Its subcellular location is the cytoplasm. The RuvA-RuvB-RuvC complex processes Holliday junction (HJ) DNA during genetic recombination and DNA repair, while the RuvA-RuvB complex plays an important role in the rescue of blocked DNA replication forks via replication fork reversal (RFR). RuvA specifically binds to HJ cruciform DNA, conferring on it an open structure. The RuvB hexamer acts as an ATP-dependent pump, pulling dsDNA into and through the RuvAB complex. HJ branch migration allows RuvC to scan DNA until it finds its consensus sequence, where it cleaves and resolves the cruciform DNA. This Pasteurella multocida (strain Pm70) protein is Holliday junction branch migration complex subunit RuvA.